We begin with the raw amino-acid sequence, 779 residues long: Endonuclease MutS2 (779 aa).

328-335 provides a ligand contact to ATP; it reads GPNTGGKT. One can recognise a Smr domain in the interval 704–779; the sequence is LDLRGKRYEE…GSGATIVTLG (76 aa).

The protein belongs to the DNA mismatch repair MutS family. MutS2 subfamily. In terms of assembly, homodimer. Binds to stalled ribosomes, contacting rRNA.

Its function is as follows. Endonuclease that is involved in the suppression of homologous recombination and thus may have a key role in the control of bacterial genetic diversity. Acts as a ribosome collision sensor, splitting the ribosome into its 2 subunits. Detects stalled/collided 70S ribosomes which it binds and splits by an ATP-hydrolysis driven conformational change. Acts upstream of the ribosome quality control system (RQC), a ribosome-associated complex that mediates the extraction of incompletely synthesized nascent chains from stalled ribosomes and their subsequent degradation. Probably generates substrates for RQC. This chain is Endonuclease MutS2, found in Streptococcus pyogenes serotype M5 (strain Manfredo).